The chain runs to 157 residues: MDPQTLITKANKVSYYGNPTSKESWRYDWYQPSKVSSNVQQPQQQLGDMENNLEKYPFRYKTWLRNQEDEKNLQRESCEDILDLKEFDRRILKKSLMTSHTKGDTSKATGAPSANQGDEALSVDDIRGAVGNSEAIPGLSAGVNNDNTKESKDVKMN.

Ser-77 bears the Phosphoserine mark. The tract at residues 95–157 is disordered; that stretch reads SLMTSHTKGD…TKESKDVKMN (63 aa). Polar residues predominate over residues 96-116; it reads LMTSHTKGDTSKATGAPSANQ. Ser-122 bears the Phosphoserine mark. The segment covering 147 to 157 has biased composition (basic and acidic residues); that stretch reads NTKESKDVKMN.

Interacts with STH1 and SWI3. Component of the two forms of the RSC complex composed of at least either RSC1 or RSC2, and ARP7, ARP9, LDB7, NPL6, RSC3, RSC30, RSC4, RSC58, RSC6, RSC8, RSC9, SFH1, STH1, HTL1 and probably RTT102. The complexes interact with histone and histone variant components of centromeric chromatin. Probable additional component of the SWI/SNF global transcription activator complex. The 1.14 MDa SWI/SNF complex is composed of 11 different subunits: one copy each of SWI1, SNF2/SWI2, SNF5, SNF12/SWP73, ARP7/SWP61, ARP9/SWP59; two copies each of SWI3, SNF6, SNF11, SWP82; and three copies of TAF14/SWP29.

The protein localises to the nucleus. Probable component of the chromatin structure-remodeling complex (RSC) which is involved in transcription regulation and nucleosome positioning. RSC is responsible for the transfer of a histone octamer from a nucleosome core particle to naked DNA. The reaction requires ATP and involves an activated RSC-nucleosome intermediate. Remodeling reaction also involves DNA translocation, DNA twist and conformational change. As a reconfigurer of centromeric and flanking nucleosomes, RSC complex is required both for proper kinetochore function in chromosome segregation and, via a PKC1-dependent signaling pathway, for organization of the cellular cytoskeleton. Probable component of the SWI/SNF complex, an ATP-dependent chromatin-remodeling complex, is required for the positive and negative regulation of gene expression of a large number of genes. It changes chromatin structure by altering DNA-histone contacts within a nucleosome, leading eventually to a change in nucleosome position, thus facilitating or repressing binding of gene-specific transcription factors. The protein is Regulator of Ty1 transposition protein 102 (RTT102) of Saccharomyces cerevisiae (strain ATCC 204508 / S288c) (Baker's yeast).